Reading from the N-terminus, the 328-residue chain is N-acyl-aromatic-L-amino acid amidohydrolase (carboxylate-forming) A (328 aa).

The Zn(2+) site is built by H30 and E33. Residues R74 and 81–82 (NR) contribute to the substrate site. Residue H127 participates in Zn(2+) binding. Substrate-binding residues include E189 and Y300.

Belongs to the AspA/AstE family. Aspartoacylase subfamily. In terms of assembly, homotetramer. The cofactor is Zn(2+).

Its subcellular location is the apical cell membrane. It localises to the cytoplasm. It catalyses the reaction an N-acyl-aromatic L-alpha-amino acid + H2O = an aromatic L-alpha-amino acid + a carboxylate. The enzyme catalyses an N-acetyl-L-cysteine-S-conjugate + H2O = an S-substituted L-cysteine + acetate. Plays an important role in deacetylating mercapturic acids in kidney proximal tubules. The polypeptide is N-acyl-aromatic-L-amino acid amidohydrolase (carboxylate-forming) A (acy3.1) (Danio rerio (Zebrafish)).